A 729-amino-acid polypeptide reads, in one-letter code: Fatty acid oxidation complex subunit alpha (729 aa).

The segment at 1 to 189 (MLYKGDTLYL…KIGLVDGVVK (189 aa)) is enoyl-CoA hydratase/isomerase. Residue aspartate 296 participates in substrate binding. Residues 311–729 (ETPKQAAVLG…ARPVGDLKTA (419 aa)) are 3-hydroxyacyl-CoA dehydrogenase. NAD(+)-binding positions include methionine 324, aspartate 343, 400-402 (VVE), lysine 407, and serine 429. The active-site For 3-hydroxyacyl-CoA dehydrogenase activity is the histidine 450. Asparagine 453 is a binding site for NAD(+). Substrate is bound by residues asparagine 500 and tyrosine 660. The interval 708 to 729 (RHNEPYYPPVEPARPVGDLKTA) is disordered.

It in the N-terminal section; belongs to the enoyl-CoA hydratase/isomerase family. In the C-terminal section; belongs to the 3-hydroxyacyl-CoA dehydrogenase family. As to quaternary structure, heterotetramer of two alpha chains (FadB) and two beta chains (FadA).

It carries out the reaction a (3S)-3-hydroxyacyl-CoA + NAD(+) = a 3-oxoacyl-CoA + NADH + H(+). The enzyme catalyses a (3S)-3-hydroxyacyl-CoA = a (2E)-enoyl-CoA + H2O. It catalyses the reaction a 4-saturated-(3S)-3-hydroxyacyl-CoA = a (3E)-enoyl-CoA + H2O. The catalysed reaction is (3S)-3-hydroxybutanoyl-CoA = (3R)-3-hydroxybutanoyl-CoA. It carries out the reaction a (3Z)-enoyl-CoA = a 4-saturated (2E)-enoyl-CoA. The enzyme catalyses a (3E)-enoyl-CoA = a 4-saturated (2E)-enoyl-CoA. The protein operates within lipid metabolism; fatty acid beta-oxidation. Its function is as follows. Involved in the aerobic and anaerobic degradation of long-chain fatty acids via beta-oxidation cycle. Catalyzes the formation of 3-oxoacyl-CoA from enoyl-CoA via L-3-hydroxyacyl-CoA. It can also use D-3-hydroxyacyl-CoA and cis-3-enoyl-CoA as substrate. This chain is Fatty acid oxidation complex subunit alpha, found in Escherichia coli O6:H1 (strain CFT073 / ATCC 700928 / UPEC).